We begin with the raw amino-acid sequence, 621 residues long: Bifunctional 3'-phosphoadenosine 5'-phosphosulfate synthase 2 (621 aa).

The segment at 1 to 216 (MSANFKMNHK…VVELLQEQNI (216 aa)) is adenylyl-sulfate kinase. An ATP-binding site is contributed by 53 to 58 (GAGKTT). Adenosine 5'-phosphosulfate contacts are provided by residues 80 to 83 (DNVR), Phe-92, 97 to 100 (REEN), 123 to 124 (IS), Lys-162, and 175 to 176 (GF). ATP contacts are provided by residues Ser-198, 415–418 (QLRN), 517–521 (GRDPA), and Ala-559. The sulfate adenylyltransferase stretch occupies residues 225–621 (IHELFVPENK…DYYRSLEKTN (397 aa)).

The protein in the N-terminal section; belongs to the APS kinase family. In the C-terminal section; belongs to the sulfate adenylyltransferase family. In terms of tissue distribution, expressed in liver, cartilage, skin and brain.

It catalyses the reaction sulfate + ATP + H(+) = adenosine 5'-phosphosulfate + diphosphate. The enzyme catalyses adenosine 5'-phosphosulfate + ATP = 3'-phosphoadenylyl sulfate + ADP + H(+). It functions in the pathway sulfur metabolism; sulfate assimilation. In terms of biological role, bifunctional enzyme with both ATP sulfurylase and APS kinase activity, which mediates two steps in the sulfate activation pathway. The first step is the transfer of a sulfate group to ATP to yield adenosine 5'-phosphosulfate (APS), and the second step is the transfer of a phosphate group from ATP to APS yielding 3'-phosphoadenylylsulfate/PAPS, the activated sulfate donor used by sulfotransferases. In mammals, PAPS is the sole source of sulfate while APS appears to only be an intermediate in the sulfate-activation pathway. May have an important role in skeletogenesis during postnatal growth. The chain is Bifunctional 3'-phosphoadenosine 5'-phosphosulfate synthase 2 (Papss2) from Mus musculus (Mouse).